The following is a 181-amino-acid chain: Isopentenyl-diphosphate Delta-isomerase (181 aa).

Mn(2+) is bound by residues His24 and His30. The region spanning 28-168 is the Nudix hydrolase domain; sequence LLHLAFSVLL…PDTFSVWFPT (141 aa). Cys68 is a catalytic residue. Mg(2+) is bound at residue Cys68. Mn(2+) is bound at residue His70. Glu88 contributes to the Mg(2+) binding site. Mn(2+) is bound by residues Glu117 and Glu119. Glu119 is an active-site residue.

The protein belongs to the IPP isomerase type 1 family. The cofactor is Mg(2+). Mn(2+) is required as a cofactor.

The protein resides in the cytoplasm. It carries out the reaction isopentenyl diphosphate = dimethylallyl diphosphate. Its pathway is isoprenoid biosynthesis; dimethylallyl diphosphate biosynthesis; dimethylallyl diphosphate from isopentenyl diphosphate: step 1/1. Catalyzes the 1,3-allylic rearrangement of the homoallylic substrate isopentenyl (IPP) to its highly electrophilic allylic isomer, dimethylallyl diphosphate (DMAPP). The protein is Isopentenyl-diphosphate Delta-isomerase of Aliivibrio fischeri (strain ATCC 700601 / ES114) (Vibrio fischeri).